A 196-amino-acid chain; its full sequence is Imidazoleglycerol-phosphate dehydratase (196 aa).

Belongs to the imidazoleglycerol-phosphate dehydratase family.

It is found in the cytoplasm. The enzyme catalyses D-erythro-1-(imidazol-4-yl)glycerol 3-phosphate = 3-(imidazol-4-yl)-2-oxopropyl phosphate + H2O. Its pathway is amino-acid biosynthesis; L-histidine biosynthesis; L-histidine from 5-phospho-alpha-D-ribose 1-diphosphate: step 6/9. The protein is Imidazoleglycerol-phosphate dehydratase of Chlorobium chlorochromatii (strain CaD3).